The following is a 479-amino-acid chain: Variant surface glycoprotein ILTAT 1.22 (479 aa).

The signal sequence occupies residues 1-12 (MDTAQVFALFYM). N-linked (GlcNAc...) asparagine glycosylation is found at Asn120 and Asn458. A lipid anchor (GPI-anchor amidated asparagine) is attached at Asn462. A propeptide spans 463–479 (NSFAIKTSTLLLAVLLF) (removed in mature form).

The protein resides in the cell membrane. VSG forms a coat on the surface of the parasite. The trypanosome evades the immune response of the host by expressing a series of antigenically distinct VSGs from an estimated 1000 VSG genes. This chain is Variant surface glycoprotein ILTAT 1.22, found in Trypanosoma brucei brucei.